The sequence spans 347 residues: NADH-ubiquinone oxidoreductase chain 2 (347 aa).

11 helical membrane passes run 3-23, 25-45, 59-79, 96-116, 127-147, 149-169, 178-198, 201-221, 239-259, 274-294, and 326-346; these read PMTF…VLLS, HWFM…PVLM, YFLT…INTM, ILIT…FWVP, GLIL…QIYP, LNTN…GWGG, IMAY…TYNP, SLLN…LLII, IVTT…PLTG, NSLI…FFYM, and TAPL…LITL.

The protein belongs to the complex I subunit 2 family. In terms of assembly, core subunit of respiratory chain NADH dehydrogenase (Complex I) which is composed of 45 different subunits. Interacts with TMEM242.

The protein resides in the mitochondrion inner membrane. It catalyses the reaction a ubiquinone + NADH + 5 H(+)(in) = a ubiquinol + NAD(+) + 4 H(+)(out). Its function is as follows. Core subunit of the mitochondrial membrane respiratory chain NADH dehydrogenase (Complex I) which catalyzes electron transfer from NADH through the respiratory chain, using ubiquinone as an electron acceptor. Essential for the catalytic activity and assembly of complex I. This Sylvisorex ollula (Greater forest shrew) protein is NADH-ubiquinone oxidoreductase chain 2.